Reading from the N-terminus, the 423-residue chain is Sporulation-regulated protein 28 (423 aa).

Positions 28–342 (KGLQLSILLL…ENYRAKVLTE (315 aa)) constitute a Septin-type G domain. The tract at residues 38 to 45 (GEKGSGKS) is G1 motif. Residues 38–45 (GEKGSGKS), G124, 204–212 (KADGLTETE), and R291 contribute to the GTP site. Positions 121 to 124 (LFPG) are G3 motif. A G4 motif region spans residues 203 to 206 (PKAD). Over residues 360–381 (RGSVSNVSTRRNSASRTLGNPD) the composition is skewed to polar residues. The interval 360–385 (RGSVSNVSTRRNSASRTLGNPDTNDE) is disordered. A coiled-coil region spans residues 384–417 (DENAYQIHKEIDEKNRIIEDYQRKIDLLEKMLAA).

The protein belongs to the TRAFAC class TrmE-Era-EngA-EngB-Septin-like GTPase superfamily. Septin GTPase family. As to quaternary structure, interacts with itself. Interacts with CDC11 and SPR3; probably to form a ring at the bud neck.

It is found in the membrane. The protein localises to the bud neck. Functionally, septins are GTPases involved in cytokinesis that assemble into filaments and form a ring at the cleavage site. May act by recruiting MYO1 and HOF1, a protein involved in septation, to the site of cleavage. Septins are also involved in cell morphogenesis, bud site selection, chitin deposition, cell cycle regulation, cell compartmentalization and spore wall formation. The chain is Sporulation-regulated protein 28 (SPR28) from Saccharomyces cerevisiae (strain ATCC 204508 / S288c) (Baker's yeast).